The following is a 459-amino-acid chain: U-box domain-containing protein 75 (459 aa).

In terms of domain architecture, U-box spans 64–138 (AVPAVFICPI…AAWFSRRYTR (75 aa)). 2 ARM repeats span residues 188 to 229 (QSVT…GVPL) and 231 to 270 (ADAK…ILME).

As to quaternary structure, interacts with GPA1. Expressed highly in panicles at flowering time, at moderate levels in vegetative shoot apices, leaf sheaths, leaf blades, and elongating internodes, and at low levels in roots.

Its subcellular location is the cell membrane. The catalysed reaction is S-ubiquitinyl-[E2 ubiquitin-conjugating enzyme]-L-cysteine + [acceptor protein]-L-lysine = [E2 ubiquitin-conjugating enzyme]-L-cysteine + N(6)-ubiquitinyl-[acceptor protein]-L-lysine.. It participates in protein modification; protein ubiquitination. Its function is as follows. E3 ubiquitin ligase that may function as positive regulator of brassinosteroid (BR) signaling. Possesses E3 ubiquitin ligase in vitro. Acts together with the heterotrimeric G alpha subunit GPA1 at the plasma membrane to mediate a BR signaling pathway that affects plant growth and development. Does not seem to be involved in gibberellin or cytokinin responses. The sequence is that of U-box domain-containing protein 75 from Oryza sativa subsp. japonica (Rice).